A 440-amino-acid polypeptide reads, in one-letter code: Serine hydroxymethyltransferase (440 aa).

(6S)-5,6,7,8-tetrahydrofolate is bound by residues leucine 119 and 123–125 (GHL). N6-(pyridoxal phosphate)lysine is present on lysine 228. Position 370–372 (370–372 (SPF)) interacts with (6S)-5,6,7,8-tetrahydrofolate.

Belongs to the SHMT family. In terms of assembly, homodimer. The cofactor is pyridoxal 5'-phosphate.

The protein resides in the cytoplasm. It catalyses the reaction (6R)-5,10-methylene-5,6,7,8-tetrahydrofolate + glycine + H2O = (6S)-5,6,7,8-tetrahydrofolate + L-serine. Its pathway is one-carbon metabolism; tetrahydrofolate interconversion. It functions in the pathway amino-acid biosynthesis; glycine biosynthesis; glycine from L-serine: step 1/1. Its function is as follows. Catalyzes the reversible interconversion of serine and glycine with tetrahydrofolate (THF) serving as the one-carbon carrier. This reaction serves as the major source of one-carbon groups required for the biosynthesis of purines, thymidylate, methionine, and other important biomolecules. Also exhibits THF-independent aldolase activity toward beta-hydroxyamino acids, producing glycine and aldehydes, via a retro-aldol mechanism. In Chlorobium luteolum (strain DSM 273 / BCRC 81028 / 2530) (Pelodictyon luteolum), this protein is Serine hydroxymethyltransferase.